The primary structure comprises 662 residues: Transmembrane 9 superfamily member 2 (662 aa).

The N-terminal stretch at 1 to 28 is a signal peptide; it reads MSSRPPASPPAQGSRLLLLSLLLLGTVP. The Lumenal segment spans residues 29–299; that stretch reads GPRPGSAFYL…LESMPHTHIQ (271 aa). A helical membrane pass occupies residues 300–320; that stretch reads WFSIMNSLVIVLFLSGMVAMI. Topologically, residues 321 to 373 are cytoplasmic; that stretch reads MLRTLHKDIARYNQMDSTEDAQEEFGWKLVHGDIFRPPRKGMLLSVFLGSGTQ. A helical transmembrane segment spans residues 374–394; sequence ILIMTFVTLFFACLGFLSPAN. Residues 395–397 are Lumenal-facing; it reads RGA. The helical transmembrane segment at 398 to 418 threads the bilayer; that stretch reads LMTCAVVLWVLLGTPAGYVAA. At 419 to 436 the chain is on the cytoplasmic side; it reads RFYKSFGGEKWKTNVLLT. Residues 437–457 traverse the membrane as a helical segment; the sequence is SFLCPGIVFADFFIMNLILWG. At 458-465 the chain is on the lumenal side; it reads EGSSAAIP. A helical membrane pass occupies residues 466-486; that stretch reads FGTLVAILALWFCISVPLTFI. The Cytoplasmic portion of the chain corresponds to 487–521; it reads GAYFGFKKNAIEHPVRTNQIPRQIPEQSFYTKPLP. Residues 522–542 traverse the membrane as a helical segment; it reads GIIMGGILPFGCIFIQLFFIL. Topologically, residues 543 to 553 are lumenal; sequence NSIWSHQMYYM. The helical transmembrane segment at 554-574 threads the bilayer; it reads FGFLFLVFIILVITCSEATIL. The Cytoplasmic portion of the chain corresponds to 575-590; the sequence is LCYFHLCAEDYHWQWR. Residues 591–611 form a helical membrane-spanning segment; it reads SFLTSGFTAVYFLIYAIHYFF. Residues 612–630 lie on the Lumenal side of the membrane; it reads SKLQITGTASTILYFGYTM. Residues 631 to 651 traverse the membrane as a helical segment; sequence IMVLIFFLFTGTIGFFACFWF. Residues 652–662 are Cytoplasmic-facing; the sequence is VTKIYSVVKVD.

The protein belongs to the nonaspanin (TM9SF) (TC 9.A.2) family.

It localises to the endosome membrane. The protein localises to the golgi outpost. The protein resides in the cytoplasm. It is found in the cytoskeleton. Its subcellular location is the microtubule organizing center. In the intracellular compartments, may function as a channel or small molecule transporter. This chain is Transmembrane 9 superfamily member 2 (Tm9sf2), found in Mus musculus (Mouse).